We begin with the raw amino-acid sequence, 342 residues long: Oxygen-dependent coproporphyrinogen-III oxidase (342 aa).

S98 lines the substrate pocket. Positions 102 and 112 each coordinate a divalent metal cation. Residue H112 is the Proton donor of the active site. 114–116 (NYR) is a substrate binding site. The a divalent metal cation site is built by H146 and H176. Residues 266–301 (YVEFNLVWDRGTIFGLQTNGRTESILMSLPPLARWE) form an important for dimerization region.

This sequence belongs to the aerobic coproporphyrinogen-III oxidase family. In terms of assembly, homodimer. Requires a divalent metal cation as cofactor.

The protein resides in the cytoplasm. It carries out the reaction coproporphyrinogen III + O2 + 2 H(+) = protoporphyrinogen IX + 2 CO2 + 2 H2O. It functions in the pathway porphyrin-containing compound metabolism; protoporphyrin-IX biosynthesis; protoporphyrinogen-IX from coproporphyrinogen-III (O2 route): step 1/1. Its function is as follows. Involved in the heme and chlorophyll biosynthesis. Catalyzes the aerobic oxidative decarboxylation of propionate groups of rings A and B of coproporphyrinogen-III to yield the vinyl groups in protoporphyrinogen-IX. This Prochlorococcus marinus subsp. pastoris (strain CCMP1986 / NIES-2087 / MED4) protein is Oxygen-dependent coproporphyrinogen-III oxidase.